A 205-amino-acid polypeptide reads, in one-letter code: N-(5'-phosphoribosyl)anthranilate isomerase (205 aa).

It belongs to the TrpF family.

It carries out the reaction N-(5-phospho-beta-D-ribosyl)anthranilate = 1-(2-carboxyphenylamino)-1-deoxy-D-ribulose 5-phosphate. Its pathway is amino-acid biosynthesis; L-tryptophan biosynthesis; L-tryptophan from chorismate: step 3/5. The polypeptide is N-(5'-phosphoribosyl)anthranilate isomerase (Thermotoga petrophila (strain ATCC BAA-488 / DSM 13995 / JCM 10881 / RKU-1)).